Consider the following 517-residue polypeptide: Dopamine receptor 4 (517 aa).

The Extracellular segment spans residues 1–46; the sequence is MLAYGSDPNAEDLYITMTPSVSTENDTTVWATEEPAAIVWRHPLLA. Asn25 carries an N-linked (GlcNAc...) asparagine glycan. A helical membrane pass occupies residues 47 to 67; it reads IALFSICLLTVAGNCLVVIAV. The Cytoplasmic portion of the chain corresponds to 68–77; sequence CTKKYLRNPT. A helical transmembrane segment spans residues 78–98; the sequence is GYLIISLAIADLIVGVIVMPM. Topologically, residues 99-108 are extracellular; that stretch reads NSLFEIANHT. The N-linked (GlcNAc...) asparagine glycan is linked to Asn106. Residues 109-129 traverse the membrane as a helical segment; that stretch reads WLFGLMMCDVFHAMDILASTA. Topologically, residues 130-159 are cytoplasmic; sequence SIWNLCVISLDRYMAGQDPIGYRDKVSKRR. The chain crosses the membrane as a helical span at residues 160-180; sequence ILMAILSVWVLSAILSFPGII. At 181-209 the chain is on the extracellular side; it reads WWRTSSPHLYEDQSQCLFTDSKMYVSFSS. Residues 210–230 traverse the membrane as a helical segment; it reads LVSFYIPLFLILFAYGKVYII. Residues 231–409 are Cytoplasmic-facing; sequence ATRHSKGMRM…YVHEQRAART (179 aa). A disordered region spans residues 309 to 339; the sequence is NDRGEHNNNNTVRQPLLRGTEGCHSDSISRS. Residues 410–430 traverse the membrane as a helical segment; it reads LSIVVGAFILCWTPFFVFTPL. The Extracellular portion of the chain corresponds to 431 to 442; it reads TAFCESCFSNKE. The chain crosses the membrane as a helical span at residues 443–463; the sequence is TIFTFVTWAGHLNSMLNPLIY. Residues 464–517 lie on the Cytoplasmic side of the membrane; it reads SRFSRDFRRAFKQILTCQRQQKVKTAFKTPLSLVFTQLISVTQMWEQPPNTSIE.

The protein belongs to the G-protein coupled receptor 1 family. As to expression, expressed in pharyngeal neurons I1 and I2, neurons ASG, AVL, CAN, PQR, vulva, intestine, rectal glands and rectal epithelial glands. Also expressed in neurons in ray 8 in males.

The protein resides in the cell membrane. In terms of biological role, receptor for dopamine. The activity of this receptor is mediated by G proteins which activate adenylyl cyclase. In terms of antagonist responses, would be classed with the D1-like dopamine receptor group. The sequence is that of Dopamine receptor 4 (dop-4) from Caenorhabditis elegans.